The chain runs to 168 residues: Urease accessory protein UreE (168 aa).

Residues 137 to 168 (PESGAYHGTTGHGGGHSHSHGHSHDHHHDHSH) form a disordered region. Basic residues predominate over residues 151-161 (GHSHSHGHSHD).

Belongs to the UreE family.

Its subcellular location is the cytoplasm. In terms of biological role, involved in urease metallocenter assembly. Binds nickel. Probably functions as a nickel donor during metallocenter assembly. The chain is Urease accessory protein UreE from Saccharophagus degradans (strain 2-40 / ATCC 43961 / DSM 17024).